The chain runs to 347 residues: S-adenosylmethionine:tRNA ribosyltransferase-isomerase (347 aa).

This sequence belongs to the QueA family. As to quaternary structure, monomer.

Its subcellular location is the cytoplasm. It carries out the reaction 7-aminomethyl-7-carbaguanosine(34) in tRNA + S-adenosyl-L-methionine = epoxyqueuosine(34) in tRNA + adenine + L-methionine + 2 H(+). It participates in tRNA modification; tRNA-queuosine biosynthesis. Functionally, transfers and isomerizes the ribose moiety from AdoMet to the 7-aminomethyl group of 7-deazaguanine (preQ1-tRNA) to give epoxyqueuosine (oQ-tRNA). This is S-adenosylmethionine:tRNA ribosyltransferase-isomerase from Pseudomonas aeruginosa (strain ATCC 15692 / DSM 22644 / CIP 104116 / JCM 14847 / LMG 12228 / 1C / PRS 101 / PAO1).